The chain runs to 138 residues: DNA-directed RNA polymerase II subunit 4 (138 aa).

The residue at position 2 (S2) is an N-acetylserine.

This sequence belongs to the eukaryotic RPB4 RNA polymerase subunit family. As to quaternary structure, component of the RNA polymerase II complex consisting of at least 12 subunits. Interacts with NRPB7.

It is found in the nucleus. Functionally, DNA-dependent RNA polymerase catalyzes the transcription of DNA into RNA using the four ribonucleoside triphosphates as substrates. Second largest component of RNA polymerase II which synthesizes mRNA precursors and many functional non-coding RNAs. Proposed to contribute to the polymerase catalytic activity and forms the polymerase active center together with the largest subunit. Pol II is the central component of the basal RNA polymerase II transcription machinery. It is composed of mobile elements that move relative to each other. In Arabidopsis thaliana (Mouse-ear cress), this protein is DNA-directed RNA polymerase II subunit 4 (NRPB4).